A 64-amino-acid polypeptide reads, in one-letter code: Disintegrin schistatin (64 aa).

The Disintegrin domain occupies 1 to 64 (NSVHPCCDPV…PDCPRNRYNV (64 aa)). Intrachain disulfides connect C6-C29, C20-C26, C25-C50, and C38-C57. The Cell attachment site motif lies at 42 to 44 (RGD).

The protein belongs to the disintegrin family. Dimeric disintegrin subfamily. In terms of assembly, homodimer; disulfide-linked. Expressed by the venom gland.

It localises to the secreted. Its function is as follows. May bind to both alpha-IIb/beta-3 (ITGA2B/ITGB3) and alpha-V/beta-3 (ITGAV/ITGB3) integrins, and may inhibit platelet aggregation. This chain is Disintegrin schistatin, found in Echis carinatus (Saw-scaled viper).